The sequence spans 191 residues: Classical arabinogalactan protein 9 (191 aa).

A signal peptide spans 1-20; that stretch reads MARSFAIAVICIVLIAGVTG. Positions 20–172 are disordered; sequence GQAPTSPPTA…SPTDVNDQNG (153 aa). Position 21 is a pyrrolidone carboxylic acid (glutamine 21). Residues proline 23, proline 26, proline 27, proline 31, and proline 33 each carry the 4-hydroxyproline modification. Pro residues predominate over residues 24 to 146; that stretch reads TSPPTATPAP…PSPSSSPPLP (123 aa). Residues proline 26, proline 27, proline 31, and proline 33 are each glycosylated (O-linked (Ara...) hydroxyproline). Positions 155–172 are enriched in polar residues; it reads TDSISPAPSPTDVNDQNG. Glycine 172 carries the GPI-anchor amidated glycine lipid modification. A propeptide spans 173 to 191 (removed in mature form); the sequence is ASKMVSSLVFGSVLVWFMI.

It belongs to the classical AGP family. O-glycosylated on hydroxyprolines; noncontiguous hydroxylproline residues are glycosylated with arabinogalactan. In terms of tissue distribution, predominantly expressed in flowers and at a lower level in leaves and siliques.

It is found in the cell membrane. Proteoglycan that seems to be implicated in diverse developmental roles such as differentiation, cell-cell recognition, embryogenesis and programmed cell death. This Arabidopsis thaliana (Mouse-ear cress) protein is Classical arabinogalactan protein 9 (AGP9).